The chain runs to 481 residues: O-acetyltransferase andG (481 aa).

Belongs to the fumigaclavine B O-acetyltransferase family. Monomer.

It functions in the pathway secondary metabolite biosynthesis; terpenoid biosynthesis. Its function is as follows. O-acetyltransferase; part of the gene cluster that mediates the biosynthesis of anditomin, a fungal meroterpenoid. The first step of the pathway is the synthesis of 3,5-dimethylorsellinic acid (DMOA) by the polyketide synthase andM. DMOA is then converted to the phthalide compound 5,7-dihydroxy-4,6-dimethylphthalide (DHDMP) by the cytochrome P450 monooxygenase andK, which is further prenylated by the prenyltransferase andD to yield farnesyl-DHDMP. Further epoxidation by the FAD-dependent monooxygenase andE leads to epoxyfarnesyl-DHDMP. The next step involves the terpene cyclase andB that converts epoxyfarnesyl-DHDMP into preandiloid A through opening of the epoxide ring followed by the cyclization of the farnesyl moiety. Preandiloid A is in turn oxidized at the C-3 hydroxyl group to yield preandiloid B by the dehydrogenase andC. The dioxygenase andA is solely responsible for the dehydrogenation of preandiloid B leading to the enone preandiloid C, as well as for the intriguing structural rearrangement to generate the bicyclo[2.2.2]octane core, transforming preandiloid C into andiconin. FAD-binding monooxygenase andJ then produces andilesin D which is reduced by dehydrogenase andI to yield andilesin A. Action of acetyltransferase andG followed by a spontaneous acetate elimination leads then to andilesin B, which is in turn substrate of the short chain dehydrogenase andH to yield andilesin C. Finally, the dioxygenase andF catalyzes the transformation of andilesin C to anditomin. This Emericella variicolor (Aspergillus stellatus) protein is O-acetyltransferase andG.